The following is a 352-amino-acid chain: Holliday junction branch migration complex subunit RuvB (352 aa).

The tract at residues 13 to 201 (IPRSRKELRL…FGLCHKIEFY (189 aa)) is large ATPase domain (RuvB-L). Residues L37, R41, G82, K85, T86, T87, 148–150 (EDF), R191, Y201, and R238 each bind ATP. A Mg(2+)-binding site is contributed by T86. Residues 202 to 273 (SNDELKQIIF…IIEKALDSQK (72 aa)) form a small ATPAse domain (RuvB-S) region. Residues 276 to 352 (NRGLDNVDRK…KYISSNNEKY (77 aa)) are head domain (RuvB-H). Positions 330 and 335 each coordinate DNA.

The protein belongs to the RuvB family. In terms of assembly, homohexamer. Forms an RuvA(8)-RuvB(12)-Holliday junction (HJ) complex. HJ DNA is sandwiched between 2 RuvA tetramers; dsDNA enters through RuvA and exits via RuvB. An RuvB hexamer assembles on each DNA strand where it exits the tetramer. Each RuvB hexamer is contacted by two RuvA subunits (via domain III) on 2 adjacent RuvB subunits; this complex drives branch migration. In the full resolvosome a probable DNA-RuvA(4)-RuvB(12)-RuvC(2) complex forms which resolves the HJ.

It is found in the cytoplasm. The enzyme catalyses ATP + H2O = ADP + phosphate + H(+). Functionally, the RuvA-RuvB-RuvC complex processes Holliday junction (HJ) DNA during genetic recombination and DNA repair, while the RuvA-RuvB complex plays an important role in the rescue of blocked DNA replication forks via replication fork reversal (RFR). RuvA specifically binds to HJ cruciform DNA, conferring on it an open structure. The RuvB hexamer acts as an ATP-dependent pump, pulling dsDNA into and through the RuvAB complex. RuvB forms 2 homohexamers on either side of HJ DNA bound by 1 or 2 RuvA tetramers; 4 subunits per hexamer contact DNA at a time. Coordinated motions by a converter formed by DNA-disengaged RuvB subunits stimulates ATP hydrolysis and nucleotide exchange. Immobilization of the converter enables RuvB to convert the ATP-contained energy into a lever motion, pulling 2 nucleotides of DNA out of the RuvA tetramer per ATP hydrolyzed, thus driving DNA branch migration. The RuvB motors rotate together with the DNA substrate, which together with the progressing nucleotide cycle form the mechanistic basis for DNA recombination by continuous HJ branch migration. Branch migration allows RuvC to scan DNA until it finds its consensus sequence, where it cleaves and resolves cruciform DNA. The sequence is that of Holliday junction branch migration complex subunit RuvB from Prochlorococcus marinus (strain MIT 9515).